Reading from the N-terminus, the 360-residue chain is Mannose-1-phosphate guanylyltransferase catalytic subunit beta (360 aa).

The interval 2–222 (KALILVGGYG…QGFWMDIGQP (221 aa)) is substrate-binding domain. Asp-110 lines the GDP-alpha-D-mannose pocket. Position 110 (Asp-110) interacts with Mg(2+). Lys-162 is an active-site residue. GDP-alpha-D-mannose is bound at residue Asp-218. Positions 245–360 (YSGPGIVGNV…ESVPEPRIIM (116 aa)) are hexapeptide repeat domain.

This sequence belongs to the transferase hexapeptide repeat family. In terms of assembly, component of the GMPPA-GMPPB mannose-1-phosphate guanylyltransferase complex composed of 4 GMPPA subunits and 8 GMPPB subunits; the complex is organized into three layers, a central layer made up of 2 GMPPA dimers sandwiched between two layers each made up of 2 GMPPB dimers. GMPPB catalytic activity is reduced when part of the complex and binding of GDP-alpha-D-Mannose by GMPPA induces allosteric feedback inhibition of GMPPB. The cofactor is Mg(2+).

Its subcellular location is the cytoplasm. It carries out the reaction alpha-D-mannose 1-phosphate + GTP + H(+) = GDP-alpha-D-mannose + diphosphate. The protein operates within nucleotide-sugar biosynthesis; GDP-alpha-D-mannose biosynthesis; GDP-alpha-D-mannose from alpha-D-mannose 1-phosphate (GTP route): step 1/1. With respect to regulation, enzyme activity is reduced by incorporation into the GMPPA-GMPPB mannose-1-phosphate guanylyltransferase complex. Allosterically inhibited, when part of the GMPPA-GMPPB complex, by GDP-alpha-D-mannose binding to GMPPA. Catalytic subunit of the GMPPA-GMPPB mannose-1-phosphate guanylyltransferase complex. Catalyzes the formation of GDP-mannose, an essential precursor of glycan moieties of glycoproteins and glycolipids. Can catalyze the reverse reaction in vitro. Together with GMPPA regulates GDP-alpha-D-mannose levels. This chain is Mannose-1-phosphate guanylyltransferase catalytic subunit beta, found in Mus musculus (Mouse).